The primary structure comprises 63 residues: Large ribosomal subunit protein bL28 (63 aa).

The segment covering 11–20 (GNNSGASVSH) has biased composition (polar residues). The disordered stretch occupies residues 11-30 (GNNSGASVSHSNKKTKRKWK). Residues 21 to 30 (SNKKTKRKWK) show a composition bias toward basic residues.

The protein belongs to the bacterial ribosomal protein bL28 family.

This is Large ribosomal subunit protein bL28 from Natranaerobius thermophilus (strain ATCC BAA-1301 / DSM 18059 / JW/NM-WN-LF).